The primary structure comprises 440 residues: tRNA(Ile)-lysidine synthase (440 aa).

Residue 31–36 coordinates ATP; that stretch reads SGGADS.

This sequence belongs to the tRNA(Ile)-lysidine synthase family.

The protein localises to the cytoplasm. It carries out the reaction cytidine(34) in tRNA(Ile2) + L-lysine + ATP = lysidine(34) in tRNA(Ile2) + AMP + diphosphate + H(+). Functionally, ligates lysine onto the cytidine present at position 34 of the AUA codon-specific tRNA(Ile) that contains the anticodon CAU, in an ATP-dependent manner. Cytidine is converted to lysidine, thus changing the amino acid specificity of the tRNA from methionine to isoleucine. This is tRNA(Ile)-lysidine synthase from Borreliella burgdorferi (strain ATCC 35210 / DSM 4680 / CIP 102532 / B31) (Borrelia burgdorferi).